A 1608-amino-acid chain; its full sequence is Protein REDUCED CHLOROPLAST COVERAGE 3 (1608 aa).

Basic residues predominate over residues 1–12 (MAPRSSKGKSNN). Disordered regions lie at residues 1–22 (MAPR…KKKR) and 278–303 (VSES…GRNG). Residues 288–564 (EDEHWGGNGG…KKETDVCGKP (277 aa)) enclose the Clu domain. 4 TPR repeats span residues 848-881 (GRTL…MIAV), 890-923 (ACAY…NERE), 932-965 (MKSY…LHFT), and 974-1007 (AATY…NKRL). Disordered stretches follow at residues 1194 to 1226 (VEES…RQPD), 1238 to 1292 (HNRN…ASGA), 1369 to 1400 (KQES…KTSD), 1466 to 1499 (TPRS…VSVD), and 1531 to 1552 (PAAL…KDSA). The Nuclear localization signal motif lies at 1217-1224 (GRKSRQRQ). Polar residues-rich tracts occupy residues 1242–1265 (QDVQ…LSKS) and 1373–1385 (QESA…LTSE). Over residues 1535-1546 (SKTSPEAESGGT) the composition is skewed to polar residues.

Its subcellular location is the nucleus. It localises to the cytoplasm. It is found in the cytosol. Its function is as follows. May act as the scaffold of a protein complex, which sequesters key factors that are required for the G2 to M transition in meristematic tissues. Together with REC2, REC3 and FMT/CLU, contributes to the establishment of the cellular volume devoted to the chloroplast compartment. The chain is Protein REDUCED CHLOROPLAST COVERAGE 3 from Arabidopsis thaliana (Mouse-ear cress).